The primary structure comprises 158 residues: Small ribosomal subunit protein uS9 (158 aa).

Belongs to the universal ribosomal protein uS9 family.

This chain is Small ribosomal subunit protein uS9, found in Nitrobacter hamburgensis (strain DSM 10229 / NCIMB 13809 / X14).